The primary structure comprises 328 residues: GTPase Obg (328 aa).

The Obg domain occupies 2–160 (YNFKDSVNIT…LSVRLELFLV (159 aa)). Residues 161 to 326 (ADIGLVGLPN…LIKEFFILAK (166 aa)) form the OBG-type G domain. GTP contacts are provided by residues 167–174 (GLPNAGKS), 192–196 (FTTKI), 213–216 (DIPG), 280–283 (NKLD), and 307–309 (SIY). 2 residues coordinate Mg(2+): Ser-174 and Thr-194.

This sequence belongs to the TRAFAC class OBG-HflX-like GTPase superfamily. OBG GTPase family. In terms of assembly, monomer. The cofactor is Mg(2+).

The protein resides in the cytoplasm. In terms of biological role, an essential GTPase which binds GTP, GDP and possibly (p)ppGpp with moderate affinity, with high nucleotide exchange rates and a fairly low GTP hydrolysis rate. Plays a role in control of the cell cycle, stress response, ribosome biogenesis and in those bacteria that undergo differentiation, in morphogenesis control. This Borreliella burgdorferi (strain ATCC 35210 / DSM 4680 / CIP 102532 / B31) (Borrelia burgdorferi) protein is GTPase Obg.